A 796-amino-acid polypeptide reads, in one-letter code: Merozoite surface protein P92 (796 aa).

The signal sequence occupies residues 1–26; that stretch reads MFAVNLKICIFLSLVSFLLQCKNTLA. N-linked (GlcNAc...) asparagine glycans are attached at residues Asn27, Asn37, Asn65, Asn71, Asn168, Asn240, Asn275, Asn359, Asn502, Asn511, Asn607, Asn633, Asn728, and Asn765. Residues 571 to 720 enclose the 6-Cys domain; sequence KYEGIDLTDS…NSIKQEINKK (150 aa). Intrachain disulfides connect Cys614–Cys691 and Cys625–Cys689.

As to quaternary structure, interacts with host complement factor CFH isoform 1 (via sushi 4-6 domains) and CFH isoform FHL-1 (via sushi 4-6 domains); this interaction recruits CFH onto the merozoite surface preventing complement-mediated cell lysis. The interaction does not affect CFH activity.

It is found in the cell surface. It localises to the cell membrane. In terms of biological role, during the asexual blood stage, recruits host complement factor H CFH to the surface of merozoites resulting in the down-regulation of the host complement alternative pathway and thus, protecting merozoites from complement-mediated lysis. The protein is Merozoite surface protein P92 of Plasmodium falciparum (isolate 3D7).